The following is a 243-amino-acid chain: Fibroblast growth factor 12 (243 aa).

Disordered regions lie at residues 1–39 and 216–243; these read MAAA…DGRS and IGEK…QDST. Residues 11–38 carry the Bipartite nuclear localization signal motif; sequence RQKRQARESNSDRVSASKRRSSPSKDGR.

It belongs to the heparin-binding growth factors family. Interacts with the C-terminal region of SCN9A. In terms of tissue distribution, brain, eye and testis; highly expressed in embryonic retina, olfactory epithelium, olfactory bulb, and in a segmental pattern of the body wall; in adult olfactory bulb, less in cerebellum, deep cerebellar nuclei, cortex and multiple midbrain structures.

The protein resides in the nucleus. Functionally, involved in nervous system development and function. Involved in the positive regulation of voltage-gated sodium channel activity. Promotes neuronal excitability by elevating the voltage dependence of neuronal sodium channel SCN8A fast inactivation. The chain is Fibroblast growth factor 12 (FGF12) from Homo sapiens (Human).